The following is a 120-amino-acid chain: Alanine racemase (120 aa).

Y24 acts as the Proton acceptor; specific for L-alanine in catalysis.

The protein belongs to the alanine racemase family. In terms of assembly, homodimer. Pyridoxal 5'-phosphate serves as cofactor.

It carries out the reaction L-alanine = D-alanine. Functionally, highly specific to D- and L-alanine and does not catalyze the racemization of other amino acids. This chain is Alanine racemase, found in Penaeus monodon (Giant tiger prawn).